We begin with the raw amino-acid sequence, 462 residues long: Major capsid protein (462 aa).

The protein belongs to the NCLDV major capsid protein family. Homotrimer.

The protein resides in the virion. Functionally, major capsid protein that self assembles to form an icosahedral capsid. Represents around 50% of the total virion protein mass. The polypeptide is Major capsid protein (MCP) (Costelytra zealandica (CzIV)).